A 347-amino-acid polypeptide reads, in one-letter code: Heat-inducible transcription repressor HrcA (347 aa).

It belongs to the HrcA family.

In terms of biological role, negative regulator of class I heat shock genes (grpE-dnaK-dnaJ and groELS operons). Prevents heat-shock induction of these operons. This chain is Heat-inducible transcription repressor HrcA, found in Desulforamulus reducens (strain ATCC BAA-1160 / DSM 100696 / MI-1) (Desulfotomaculum reducens).